A 284-amino-acid chain; its full sequence is Homeobox protein SIX1 (284 aa).

Residues 124–183 (GEETSYCFKEKSRGVLREWYAHNPYPSPREKRELAEATGLTTTQVSNWFKNRRQRDRAAE) constitute a DNA-binding region (homeobox). Residues 168–284 (VSNWFKNRRQ…LTSSLVDLGS (117 aa)) are disordered. Basic and acidic residues predominate over residues 179–190 (DRAAEAKERENT). Residues 227 to 284 (DQNSVLLLQSNMGHARSSNYSLPGLTASQPSHGLQAHQHQLQDSLLGPLTSSLVDLGS) are compositionally biased toward polar residues.

Belongs to the SIX/Sine oculis homeobox family. Interacts with DACH1. Interacts with EYA1. Interacts with EYA2. Interacts with CDH1. Interacts with TBX18. Interacts with CEBPA. Interacts with CEBPB. Interacts with EBF2. Phosphorylated during interphase; becomes hyperphosphorylated during mitosis. Hyperphosphorylation impairs binding to promoter elements. Post-translationally, ubiquitinated by the anaphase promoting complex (APC), leading to its proteasomal degradation. As to expression, expressed in phalangeal tendons and in skeletal muscle and in head and body mesenchyme.

The protein localises to the nucleus. It localises to the cytoplasm. Functionally, transcription factor that is involved in the regulation of cell proliferation, apoptosis and embryonic development. Plays an important role in the development of several organs, including kidney, muscle and inner ear. Depending on context, functions as a transcriptional repressor or activator. Lacks an activation domain, and requires interaction with EYA family members for transcription activation. Mediates nuclear translocation of EYA1 and EYA2. Binds the 5'-TCA[AG][AG]TTNC-3' motif present in the MEF3 element in the MYOG promoter and CIDEA enhancer. Regulates the expression of numerous genes, including MYC, CCNA1, CCND1 and EZR. Acts as an activator of the IGFBP5 promoter, probably coactivated by EYA2. Repression of precursor cell proliferation in myoblasts is switched to activation through recruitment of EYA3 to the SIX1-DACH1 complex. During myogenesis, seems to act together with EYA2 and DACH2. Regulates the expression of CCNA1. Promotes brown adipocyte differentiation. The polypeptide is Homeobox protein SIX1 (Six1) (Mus musculus (Mouse)).